Consider the following 245-residue polypeptide: Probable transcriptional regulatory protein LVIS_1199 (245 aa).

Residues 1–23 are disordered; that stretch reads MSGHSKWHNIQGRKNAQDAKRGK.

The protein belongs to the TACO1 family.

It is found in the cytoplasm. The sequence is that of Probable transcriptional regulatory protein LVIS_1199 from Levilactobacillus brevis (strain ATCC 367 / BCRC 12310 / CIP 105137 / JCM 1170 / LMG 11437 / NCIMB 947 / NCTC 947) (Lactobacillus brevis).